The sequence spans 365 residues: Solute carrier family 35 member G1 (365 aa).

Residues 1–33 (MRPQDSTGVAELQEPGLPLTDDAPPGATEEPAA) form a disordered region. Residues 23–33 (APPGATEEPAA) show a composition bias toward low complexity. 10 consecutive transmembrane segments (helical) span residues 69–89 (GLGLFYTLLSAFLFSVGSLFV), 97–117 (AVEISAFRCVFQMLVVIPCLI), 131–151 (IFLILRGVLGSTAMMLIYYAY), 156–176 (LADATVITFSSPVFTSIFAWI), 187–207 (ALFTVFTITGVILIVRPPFLF), 222–242 (LKGTFAAIGSAVFAASTLVIL), 252–272 (FLSIWYYVVLGLVESVIILSV), 286–306 (LFLIFIGLFGLGGQIFITKAL), 311–333 (AGPVAIMKTMDVVFAFIFQIIFF), and 338–357 (TWWTVGGALCVVASNVGAAI). EamA domains are found at residues 80 to 202 (FLFS…LIVR) and 233 to 357 (VFAA…GAAI).

It belongs to the TMEM20 family. In terms of assembly, interacts with STIM1; stimulated by depletion of intracellular calcium. Interacts with ORAI1. Interacts with the plasma membrane calcium-transporting ATPases ATP2B1 and ATP2B4. Interacts with ATP1A1, ATP2A2, KPNB1 and XPO1. In terms of tissue distribution, ubiquitously expressed.

It is found in the cell membrane. Its subcellular location is the endoplasmic reticulum membrane. Functionally, may play a role in intracellular calcium sensing and homeostasis. May act as a negative regulator of plasma membrane calcium-transporting ATPases preventing calcium efflux from the cell. The protein is Solute carrier family 35 member G1 (SLC35G1) of Homo sapiens (Human).